A 91-amino-acid chain; its full sequence is Small ribosomal subunit protein uS19 (91 aa).

It belongs to the universal ribosomal protein uS19 family.

Functionally, protein S19 forms a complex with S13 that binds strongly to the 16S ribosomal RNA. This is Small ribosomal subunit protein uS19 from Synechococcus sp. (strain RCC307).